The chain runs to 84 residues: Small ribosomal subunit protein bS16 (84 aa).

Belongs to the bacterial ribosomal protein bS16 family.

This chain is Small ribosomal subunit protein bS16, found in Cupriavidus pinatubonensis (strain JMP 134 / LMG 1197) (Cupriavidus necator (strain JMP 134)).